Reading from the N-terminus, the 696-residue chain is Polyribonucleotide nucleotidyltransferase (696 aa).

The Mg(2+) site is built by Asp489 and Asp495. The KH domain occupies 556–615 (PQYVTMKINPEKIRDVIGKGGVVIREITEATNCAIDISDDGTIKIAAHTTEEGEAAKRRI). The S1 motif domain occupies 625–693 (GKVYEGTVVK…RQGRVRLSMK (69 aa)).

The protein belongs to the polyribonucleotide nucleotidyltransferase family. As to quaternary structure, component of the RNA degradosome, which is a multiprotein complex involved in RNA processing and mRNA degradation. Requires Mg(2+) as cofactor.

The protein localises to the cytoplasm. The enzyme catalyses RNA(n+1) + phosphate = RNA(n) + a ribonucleoside 5'-diphosphate. Functionally, involved in mRNA degradation. Catalyzes the phosphorolysis of single-stranded polyribonucleotides processively in the 3'- to 5'-direction. This Coxiella burnetii (strain RSA 331 / Henzerling II) protein is Polyribonucleotide nucleotidyltransferase.